Reading from the N-terminus, the 275-residue chain is MSFLKTVPEELTAAAAQLGTIGAAMAAQNAAAAAPTTAIAPAALDEVSALQAALFTAYGTFYQQVSAEAQAMHDMFVNTLGISAGTYGVTESLNSSAAASPLSGITGEASAIIQATTGLFPPELSGGIGNILNIGAGNWASATSTLIGLAGGGLLPAEEAAEAASALGGEAALGELGALGAAEAALGEAGIAAGLGSASAIGMLSVPPAWAGQATLVSTTSTLPGAGWTAAAPQAAAGTFIPGMPGVASAARNSAGFGAPRYGVKPIVMPKPATV.

The PE domain occupies 5-93 (KTVPEELTAA…AGTYGVTESL (89 aa)).

The protein belongs to the mycobacterial PE family. In terms of assembly, forms a heterodimer with PPE15. The dimer forms a 1:1:1 heterotrimeric complex with EspG5.

It is found in the secreted. Its subcellular location is the cell wall. Functionally, promotes the intracellular survival of recombinant Mycobacterium within macrophages by regulating host inflammatory cytokines production and inhibiting cell late apoptosis. This is PE family protein PE8 from Mycobacterium tuberculosis (strain ATCC 25618 / H37Rv).